Reading from the N-terminus, the 142-residue chain is Large ribosomal subunit protein uL11 (142 aa).

Belongs to the universal ribosomal protein uL11 family. Part of the ribosomal stalk of the 50S ribosomal subunit. Interacts with L10 and the large rRNA to form the base of the stalk. L10 forms an elongated spine to which L12 dimers bind in a sequential fashion forming a multimeric L10(L12)X complex. In terms of processing, one or more lysine residues are methylated.

Forms part of the ribosomal stalk which helps the ribosome interact with GTP-bound translation factors. This Lachnoclostridium phytofermentans (strain ATCC 700394 / DSM 18823 / ISDg) (Clostridium phytofermentans) protein is Large ribosomal subunit protein uL11.